The chain runs to 139 residues: Large ribosomal subunit protein uL16 (139 aa).

Over residues 1 to 16 the composition is skewed to basic residues; it reads MLIPKRTKYRKQHRPV. The disordered stretch occupies residues 1 to 22; the sequence is MLIPKRTKYRKQHRPVRSGMSK.

This sequence belongs to the universal ribosomal protein uL16 family. Part of the 50S ribosomal subunit.

Binds 23S rRNA and is also seen to make contacts with the A and possibly P site tRNAs. This is Large ribosomal subunit protein uL16 from Bifidobacterium longum (strain DJO10A).